Reading from the N-terminus, the 429-residue chain is MITETLTASSARPGEAAALIAEMGARARTAAKRLAQTPTAEKAAALKAAAGAIRARSAAILAANAEDMAAGQTNGLSGAMLDRLRLDEGRLAAIADAIEAVAALPDPVGREIDRFTRPNGLELSRVRVPLGVIGIIYESRPNVTADAAALGLMAGNAVILRGGSEAVHSNRALHAAFAAGLVEAGLPADAVQLVPTQDRAAVGAMLRAQGLIDIIIPRGGKGLVARVQDEARVPVLAHLDGINHLYIDGAANPAKAVELAVNAKMRRTGICGATETILIDRAYPAPLGIVDALIAAGCEVRGDRDVAALSPHVESASAGDWDTEYLDAIVSIAMVDGLDGALAHIDAHSSRHTDAIVTEDAATAERFLTGVDSAIVMHNASTQFADGGEFGLGAEIGIATGRLHARGPVALEGLTTYKWLVRGSGQLRP.

It belongs to the gamma-glutamyl phosphate reductase family.

It is found in the cytoplasm. It carries out the reaction L-glutamate 5-semialdehyde + phosphate + NADP(+) = L-glutamyl 5-phosphate + NADPH + H(+). The protein operates within amino-acid biosynthesis; L-proline biosynthesis; L-glutamate 5-semialdehyde from L-glutamate: step 2/2. Functionally, catalyzes the NADPH-dependent reduction of L-glutamate 5-phosphate into L-glutamate 5-semialdehyde and phosphate. The product spontaneously undergoes cyclization to form 1-pyrroline-5-carboxylate. The protein is Gamma-glutamyl phosphate reductase of Sphingopyxis alaskensis (strain DSM 13593 / LMG 18877 / RB2256) (Sphingomonas alaskensis).